We begin with the raw amino-acid sequence, 298 residues long: GTPase Era (298 aa).

An Era-type G domain is found at 8-176 (RCGRIAVIGR…VSDLLALLPE (169 aa)). Residues 16 to 23 (GRPNVGKS) form a G1 region. 16–23 (GRPNVGKS) serves as a coordination point for GTP. Residues 42–46 (QTTRH) form a G2 region. A G3 region spans residues 63-66 (DTPG). GTP is bound by residues 63-67 (DTPGL) and 125-128 (NKID). Positions 125–128 (NKID) are G4. The G5 stretch occupies residues 155 to 157 (VSA). Residues 199–283 (VREQVMRQLG…FLETWVRVRK (85 aa)) enclose the KH type-2 domain.

It belongs to the TRAFAC class TrmE-Era-EngA-EngB-Septin-like GTPase superfamily. Era GTPase family. In terms of assembly, monomer.

Its subcellular location is the cytoplasm. The protein resides in the cell inner membrane. Functionally, an essential GTPase that binds both GDP and GTP, with rapid nucleotide exchange. Plays a role in 16S rRNA processing and 30S ribosomal subunit biogenesis and possibly also in cell cycle regulation and energy metabolism. This chain is GTPase Era, found in Xylella fastidiosa (strain M12).